We begin with the raw amino-acid sequence, 936 residues long: Phosphoenolpyruvate carboxylase (936 aa).

Active-site residues include histidine 155 and lysine 595.

Belongs to the PEPCase type 1 family. In terms of assembly, homotetramer. Mg(2+) is required as a cofactor. Mn(2+) serves as cofactor.

It carries out the reaction oxaloacetate + phosphate = phosphoenolpyruvate + hydrogencarbonate. With respect to regulation, exhibits positive allosteric property with acetyl-CoA and fructose 1,6-bisphosphate, and a negative one with L-aspartate and L-malate. Functionally, forms oxaloacetate, a four-carbon dicarboxylic acid source for the tricarboxylic acid cycle. This is Phosphoenolpyruvate carboxylase (ppc) from Rhodothermus marinus (Rhodothermus obamensis).